Reading from the N-terminus, the 176-residue chain is MDKRKRFWMRLSILAVISVALGYTFYSNFFADRSLARAGEQAVNFVLEDLEGESIELRELEGKGVFLNFWGTYCPPCEREMPHMEKLYGEYKEQGVEIIAVNANEPELTVQRFVDRYGLSFPIVIDKGLNVIDAYGIRPLPTTILINEHGEIVKVHTGGMTEQMVEEFMELIKPEA.

The helical; Signal-anchor for type II membrane protein transmembrane segment at 11–30 (LSILAVISVALGYTFYSNFF) threads the bilayer. The Thioredoxin domain occupies 36 to 176 (ARAGEQAVNF…EFMELIKPEA (141 aa)). A disulfide bridge links C74 with C77.

The protein belongs to the thioredoxin family. ResA subfamily.

It localises to the cell membrane. It participates in protein modification; cytochrome c assembly. In terms of biological role, thiol-disulfide oxidoreductase which is required in disulfide reduction during c-type cytochrome synthesis. May accept reducing equivalents from CcdA, leading to breakage of disulfide bonds in apocytochrome c; following this reduction heme can be covalently attached. The chain is Thiol-disulfide oxidoreductase ResA from Halalkalibacterium halodurans (strain ATCC BAA-125 / DSM 18197 / FERM 7344 / JCM 9153 / C-125) (Bacillus halodurans).